The primary structure comprises 92 residues: Large ribosomal subunit protein bL27 (92 aa).

Residues 1-9 (MLKLNLQFF) constitute a propeptide that is removed on maturation. The tract at residues 14–34 (GVGSTKNGRDSQSKRLGAKRA) is disordered.

The protein belongs to the bacterial ribosomal protein bL27 family. In terms of processing, the N-terminus is cleaved by ribosomal processing cysteine protease Prp.

This Exiguobacterium sibiricum (strain DSM 17290 / CCUG 55495 / CIP 109462 / JCM 13490 / 255-15) protein is Large ribosomal subunit protein bL27.